We begin with the raw amino-acid sequence, 143 residues long: Holo-[acyl-carrier-protein] synthase (143 aa).

Mg(2+) contacts are provided by Asp-9 and Glu-63.

It belongs to the P-Pant transferase superfamily. AcpS family. The cofactor is Mg(2+).

The protein resides in the cytoplasm. It carries out the reaction apo-[ACP] + CoA = holo-[ACP] + adenosine 3',5'-bisphosphate + H(+). Functionally, transfers the 4'-phosphopantetheine moiety from coenzyme A to a Ser of acyl-carrier-protein. The sequence is that of Holo-[acyl-carrier-protein] synthase from Burkholderia mallei (strain NCTC 10247).